The chain runs to 547 residues: CTP synthase (547 aa).

The segment at 1–265 (MARYVFITGG…DQAVLDAFGI (265 aa)) is amidoligase domain. Ser13 provides a ligand contact to CTP. UTP is bound at residue Ser13. Residues 14–19 (SLGKGL) and Asp71 each bind ATP. Residues Asp71 and Glu139 each contribute to the Mg(2+) site. CTP contacts are provided by residues 146–148 (DIE), 186–191 (KTKPTQ), and Lys222. UTP is bound by residues 186-191 (KTKPTQ) and Lys222. One can recognise a Glutamine amidotransferase type-1 domain in the interval 291-546 (RVAIVGKYTQ…VRAAVEVSRL (256 aa)). L-glutamine is bound at residue Gly353. The active-site Nucleophile; for glutamine hydrolysis is the Cys380. L-glutamine contacts are provided by residues 381–384 (LGMQ), Glu404, and Arg474. Active-site residues include His519 and Glu521.

The protein belongs to the CTP synthase family. In terms of assembly, homotetramer.

The catalysed reaction is UTP + L-glutamine + ATP + H2O = CTP + L-glutamate + ADP + phosphate + 2 H(+). It catalyses the reaction L-glutamine + H2O = L-glutamate + NH4(+). The enzyme catalyses UTP + NH4(+) + ATP = CTP + ADP + phosphate + 2 H(+). The protein operates within pyrimidine metabolism; CTP biosynthesis via de novo pathway; CTP from UDP: step 2/2. Its activity is regulated as follows. Allosterically activated by GTP, when glutamine is the substrate; GTP has no effect on the reaction when ammonia is the substrate. The allosteric effector GTP functions by stabilizing the protein conformation that binds the tetrahedral intermediate(s) formed during glutamine hydrolysis. Inhibited by the product CTP, via allosteric rather than competitive inhibition. Its function is as follows. Catalyzes the ATP-dependent amination of UTP to CTP with either L-glutamine or ammonia as the source of nitrogen. Regulates intracellular CTP levels through interactions with the four ribonucleotide triphosphates. This chain is CTP synthase, found in Cereibacter sphaeroides (strain ATCC 17023 / DSM 158 / JCM 6121 / CCUG 31486 / LMG 2827 / NBRC 12203 / NCIMB 8253 / ATH 2.4.1.) (Rhodobacter sphaeroides).